The primary structure comprises 873 residues: Disks large homolog 1 (873 aa).

An L27 domain is found at 4 to 64 (RQKDAQRALQ…YYEVSLQDTE (61 aa)). The disordered stretch occupies residues 62 to 135 (DTEDKPIEDS…SPHIPGDARP (74 aa)). Residues 63 to 77 (TEDKPIEDSSLKSRE) show a composition bias toward basic and acidic residues. A compositionally biased stretch (polar residues) spans 85 to 96 (WNLSVPPSTTGP). 2 PDZ domains span residues 230–317 (EITL…RRRK) and 325–412 (DVKL…AKPT). The segment covering 441 to 456 (SYLSQPLTPATPSRYS) has biased composition (polar residues). The tract at residues 441–464 (SYLSQPLTPATPSRYSPVSKGMLG) is disordered. Positions 474 to 555 (KIVLHRGTTG…TVTIIAQYRP (82 aa)) constitute a PDZ 3 domain. Residues 636–662 (NKDSGEQDTSDVDQHVTSNASDSESSF) are disordered. Over residues 650–662 (HVTSNASDSESSF) the composition is skewed to polar residues. Positions 683–858 (SRPVIILGPM…IYNQVKQIIE (176 aa)) constitute a Guanylate kinase-like domain.

The protein belongs to the MAGUK family.

It is found in the cell membrane. It localises to the endoplasmic reticulum membrane. The protein localises to the cell junction. Its subcellular location is the apical cell membrane. In terms of biological role, essential multidomain scaffolding protein required for normal development. Recruits channels, receptors and signaling molecules to discrete plasma membrane domains in polarized cells. Promotes epithelial cell layer barrier function via maintaining cell-cell adhesion. May play a role in adherens junction assembly, signal transduction and cell proliferation. May play a role in synapse assembly and function. The sequence is that of Disks large homolog 1 (dlg1) from Danio rerio (Zebrafish).